The primary structure comprises 669 residues: Protein BNIP5 (669 aa).

4 disordered regions span residues 1 to 116 (MPRS…REAQ), 131 to 259 (IEEP…QDDV), 273 to 401 (QLEE…RASE), and 413 to 544 (LQSA…SPER). A compositionally biased stretch (basic and acidic residues) spans 34 to 47 (RSLDRQVPRKKDPE). A compositionally biased stretch (polar residues) spans 48 to 73 (SSNTRCPSSATCRRTASDGARSSESP). Basic and acidic residues-rich tracts occupy residues 104 to 113 (EDTKKERLPR) and 131 to 148 (IEEP…KGDL). Over residues 158 to 175 (RKKSHEKRTSRKKHSHRK) the composition is skewed to basic residues. Over residues 285-295 (EAVPPRKPTPL) the composition is skewed to pro residues. Residue lysine 314 forms a Glycyl lysine isopeptide (Lys-Gly) (interchain with G-Cter in SUMO2) linkage. The segment covering 346-357 (VSSQRASTSSSL) has biased composition (polar residues). Residues 390–401 (PEEKPLLDRASE) show a composition bias toward basic and acidic residues. Over residues 445-462 (SQVKKSNLRRAFSLRKHS) the composition is skewed to basic residues. Residues 516–528 (AAGGAPAGSPGAP) are compositionally biased toward low complexity.

The protein is Protein BNIP5 (Bnip5) of Mus musculus (Mouse).